Here is a 560-residue protein sequence, read N- to C-terminus: Dihydroxy-acid dehydratase (560 aa).

Aspartate 80 provides a ligand contact to Mg(2+). Position 121 (cysteine 121) interacts with [2Fe-2S] cluster. Mg(2+)-binding residues include aspartate 122 and lysine 123. An N6-carboxylysine modification is found at lysine 123. Cysteine 194 is a [2Fe-2S] cluster binding site. Position 447 (glutamate 447) interacts with Mg(2+). Catalysis depends on serine 473, which acts as the Proton acceptor.

The protein belongs to the IlvD/Edd family. Homodimer. It depends on [2Fe-2S] cluster as a cofactor. The cofactor is Mg(2+).

It catalyses the reaction (2R)-2,3-dihydroxy-3-methylbutanoate = 3-methyl-2-oxobutanoate + H2O. The catalysed reaction is (2R,3R)-2,3-dihydroxy-3-methylpentanoate = (S)-3-methyl-2-oxopentanoate + H2O. Its pathway is amino-acid biosynthesis; L-isoleucine biosynthesis; L-isoleucine from 2-oxobutanoate: step 3/4. It functions in the pathway amino-acid biosynthesis; L-valine biosynthesis; L-valine from pyruvate: step 3/4. Its function is as follows. Functions in the biosynthesis of branched-chain amino acids. Catalyzes the dehydration of (2R,3R)-2,3-dihydroxy-3-methylpentanoate (2,3-dihydroxy-3-methylvalerate) into 2-oxo-3-methylpentanoate (2-oxo-3-methylvalerate) and of (2R)-2,3-dihydroxy-3-methylbutanoate (2,3-dihydroxyisovalerate) into 2-oxo-3-methylbutanoate (2-oxoisovalerate), the penultimate precursor to L-isoleucine and L-valine, respectively. The chain is Dihydroxy-acid dehydratase from Chloroherpeton thalassium (strain ATCC 35110 / GB-78).